Consider the following 266-residue polypeptide: Thiazole synthase (266 aa).

The active-site Schiff-base intermediate with DXP is the Lys107. 1-deoxy-D-xylulose 5-phosphate-binding positions include Gly168, 194–195 (AG), and 216–217 (NT).

Belongs to the ThiG family. In terms of assembly, homotetramer. Forms heterodimers with either ThiH or ThiS.

The protein resides in the cytoplasm. It carries out the reaction [ThiS sulfur-carrier protein]-C-terminal-Gly-aminoethanethioate + 2-iminoacetate + 1-deoxy-D-xylulose 5-phosphate = [ThiS sulfur-carrier protein]-C-terminal Gly-Gly + 2-[(2R,5Z)-2-carboxy-4-methylthiazol-5(2H)-ylidene]ethyl phosphate + 2 H2O + H(+). Its pathway is cofactor biosynthesis; thiamine diphosphate biosynthesis. Functionally, catalyzes the rearrangement of 1-deoxy-D-xylulose 5-phosphate (DXP) to produce the thiazole phosphate moiety of thiamine. Sulfur is provided by the thiocarboxylate moiety of the carrier protein ThiS. In vitro, sulfur can be provided by H(2)S. The sequence is that of Thiazole synthase from Azorhizobium caulinodans (strain ATCC 43989 / DSM 5975 / JCM 20966 / LMG 6465 / NBRC 14845 / NCIMB 13405 / ORS 571).